Reading from the N-terminus, the 200-residue chain is Phospholipase A2 inhibitor gamma subunit B (200 aa).

Residues 1–19 (MKSFLFCCLLGTFLAIGMC) form the signal peptide. 8 disulfides stabilise this stretch: Cys-22–Cys-46, Cys-25–Cys-32, Cys-39–Cys-67, Cys-73–Cys-94, Cys-95–Cys-100, Cys-120–Cys-145, Cys-138–Cys-165, and Cys-171–Cys-191. Residue Asn-33 is glycosylated (N-linked (GlcNAc...) asparagine).

This sequence belongs to the CNF-like-inhibitor family. As to quaternary structure, heterodimer of subunit A and subunit B. As to expression, expressed by the liver.

The protein resides in the secreted. Its function is as follows. Inhibits the enzymatic activity of phospholipase A2 (PA2). This chain is Phospholipase A2 inhibitor gamma subunit B, found in Gloydius brevicaudus siniticus (Chinese mamushi).